A 464-amino-acid polypeptide reads, in one-letter code: DNA primase DnaG (464 aa).

One can recognise a Toprim domain in the interval 171-245 (DTIIIVEGRA…DIDYVARAPK (75 aa)). The Mg(2+) site is built by Glu-177, Asp-219, and Asp-221.

It belongs to the archaeal DnaG primase family. Forms a ternary complex with MCM helicase and DNA. Requires Mg(2+) as cofactor.

The enzyme catalyses ssDNA + n NTP = ssDNA/pppN(pN)n-1 hybrid + (n-1) diphosphate.. Its function is as follows. RNA polymerase that catalyzes the synthesis of short RNA molecules used as primers for DNA polymerase during DNA replication. The protein is DNA primase DnaG of Methanococcus aeolicus (strain ATCC BAA-1280 / DSM 17508 / OCM 812 / Nankai-3).